A 246-amino-acid polypeptide reads, in one-letter code: Sugar fermentation stimulation protein homolog (246 aa).

This sequence belongs to the SfsA family.

This chain is Sugar fermentation stimulation protein homolog, found in Prochlorococcus marinus (strain MIT 9215).